The primary structure comprises 369 residues: 3-methylarginine biosynthesis aminotransferase ArgM (369 aa).

Lysine 216 is modified (N6-(pyridoxal phosphate)lysine).

The protein belongs to the class-I pyridoxal-phosphate-dependent aminotransferase family. Pyridoxal 5'-phosphate is required as a cofactor.

The enzyme catalyses L-arginine + 2-oxoglutarate = 5-guanidino-2-oxopentanoate + L-glutamate. It catalyses the reaction (3R)-5-guanidino-3-methyl-2-oxopentanoate + L-aspartate = (3R)-3-methyl-L-arginine + oxaloacetate. It participates in antibiotic biosynthesis. Its function is as follows. Aminotransferase involved in the formation of the rare amino acid 3-methylarginine (MeArg), which is incorporated into the peptidyl nucleoside antibiotic arginomycin. Catalyzes two rounds of transamination: the transfer of the amino group from L-arginine to 2-oxoglutarate to give glutamate and 5-guanidino-2-oxopentanoic acid, which will be methylated by ArgN. Then, ArgM specifically catalyzes transamination from the donor L-aspartate to the 5-guanidino-3-methyl-2-oxopentanoic acid produced by ArgN, generating the final product, 3-methylarginine. Cannot use arginine analogs, such as D-arginine, L-homoarginine and N-methylarginine for the first transamination. The polypeptide is 3-methylarginine biosynthesis aminotransferase ArgM (Streptomyces arginensis).